We begin with the raw amino-acid sequence, 364 residues long: Dihydroorotate dehydrogenase (quinone) (364 aa).

FMN is bound by residues 78–82 (AGFDK) and Thr102. Lys82 contacts substrate. Residue 127 to 131 (NRMGF) coordinates substrate. Asn156 and Asn189 together coordinate FMN. Residue Asn189 coordinates substrate. Ser192 acts as the Nucleophile in catalysis. Asn194 contributes to the substrate binding site. FMN contacts are provided by Lys227 and Thr255. Residue 256–257 (NT) participates in substrate binding. FMN contacts are provided by residues Gly285, Gly314, and 335–336 (YT).

The protein belongs to the dihydroorotate dehydrogenase family. Type 2 subfamily. In terms of assembly, monomer. The cofactor is FMN.

The protein resides in the cell membrane. The catalysed reaction is (S)-dihydroorotate + a quinone = orotate + a quinol. It participates in pyrimidine metabolism; UMP biosynthesis via de novo pathway; orotate from (S)-dihydroorotate (quinone route): step 1/1. In terms of biological role, catalyzes the conversion of dihydroorotate to orotate with quinone as electron acceptor. The chain is Dihydroorotate dehydrogenase (quinone) from Thermosynechococcus vestitus (strain NIES-2133 / IAM M-273 / BP-1).